The primary structure comprises 183 residues: 3-hydroxydecanoyl-[acyl-carrier-protein] dehydratase (183 aa).

Histidine 77 is an active-site residue.

It belongs to the thioester dehydratase family. FabA subfamily. As to quaternary structure, homodimer.

The protein localises to the cytoplasm. The catalysed reaction is a (3R)-hydroxyacyl-[ACP] = a (2E)-enoyl-[ACP] + H2O. It catalyses the reaction (3R)-hydroxydecanoyl-[ACP] = (2E)-decenoyl-[ACP] + H2O. The enzyme catalyses (2E)-decenoyl-[ACP] = (3Z)-decenoyl-[ACP]. It functions in the pathway lipid metabolism; fatty acid biosynthesis. In terms of biological role, necessary for the introduction of cis unsaturation into fatty acids. Catalyzes the dehydration of (3R)-3-hydroxydecanoyl-ACP to E-(2)-decenoyl-ACP and then its isomerization to Z-(3)-decenoyl-ACP. Can catalyze the dehydratase reaction for beta-hydroxyacyl-ACPs with saturated chain lengths up to 16:0, being most active on intermediate chain length. The chain is 3-hydroxydecanoyl-[acyl-carrier-protein] dehydratase from Hahella chejuensis (strain KCTC 2396).